Here is a 292-residue protein sequence, read N- to C-terminus: Formamidopyrimidine-DNA glycosylase (292 aa).

P2 functions as the Schiff-base intermediate with DNA in the catalytic mechanism. E3 (proton donor) is an active-site residue. K60 acts as the Proton donor; for beta-elimination activity in catalysis. DNA-binding residues include H109, R128, and K173. Residues 258 to 292 (NVYRRTGKKCRQCKNLIERQKISGRSTHWCRKCQK) form an FPG-type zinc finger. R282 (proton donor; for delta-elimination activity) is an active-site residue.

It belongs to the FPG family. As to quaternary structure, monomer. The cofactor is Zn(2+).

The catalysed reaction is Hydrolysis of DNA containing ring-opened 7-methylguanine residues, releasing 2,6-diamino-4-hydroxy-5-(N-methyl)formamidopyrimidine.. The enzyme catalyses 2'-deoxyribonucleotide-(2'-deoxyribose 5'-phosphate)-2'-deoxyribonucleotide-DNA = a 3'-end 2'-deoxyribonucleotide-(2,3-dehydro-2,3-deoxyribose 5'-phosphate)-DNA + a 5'-end 5'-phospho-2'-deoxyribonucleoside-DNA + H(+). In terms of biological role, involved in base excision repair of DNA damaged by oxidation or by mutagenic agents. Acts as a DNA glycosylase that recognizes and removes damaged bases. Has a preference for oxidized purines, such as 7,8-dihydro-8-oxoguanine (8-oxoG). Has AP (apurinic/apyrimidinic) lyase activity and introduces nicks in the DNA strand. Cleaves the DNA backbone by beta-delta elimination to generate a single-strand break at the site of the removed base with both 3'- and 5'-phosphates. The protein is Formamidopyrimidine-DNA glycosylase of Prochlorococcus marinus subsp. pastoris (strain CCMP1986 / NIES-2087 / MED4).